The sequence spans 355 residues: UDP-N-acetylglucosamine--N-acetylmuramyl-(pentapeptide) pyrophosphoryl-undecaprenol N-acetylglucosamine transferase (355 aa).

UDP-N-acetyl-alpha-D-glucosamine-binding positions include 14–16 (TGG), Asn-126, Arg-162, Ser-190, Ile-243, 262–267 (ALTVSE), and Gln-287.

The protein belongs to the glycosyltransferase 28 family. MurG subfamily.

Its subcellular location is the cell inner membrane. The catalysed reaction is di-trans,octa-cis-undecaprenyl diphospho-N-acetyl-alpha-D-muramoyl-L-alanyl-D-glutamyl-meso-2,6-diaminopimeloyl-D-alanyl-D-alanine + UDP-N-acetyl-alpha-D-glucosamine = di-trans,octa-cis-undecaprenyl diphospho-[N-acetyl-alpha-D-glucosaminyl-(1-&gt;4)]-N-acetyl-alpha-D-muramoyl-L-alanyl-D-glutamyl-meso-2,6-diaminopimeloyl-D-alanyl-D-alanine + UDP + H(+). Its pathway is cell wall biogenesis; peptidoglycan biosynthesis. Functionally, cell wall formation. Catalyzes the transfer of a GlcNAc subunit on undecaprenyl-pyrophosphoryl-MurNAc-pentapeptide (lipid intermediate I) to form undecaprenyl-pyrophosphoryl-MurNAc-(pentapeptide)GlcNAc (lipid intermediate II). This Vibrio vulnificus (strain CMCP6) protein is UDP-N-acetylglucosamine--N-acetylmuramyl-(pentapeptide) pyrophosphoryl-undecaprenol N-acetylglucosamine transferase.